We begin with the raw amino-acid sequence, 212 residues long: NAD(P)H-hydrate epimerase (212 aa).

Positions 11–212 (MRHYDFYTIN…ANDMGTYAVD (202 aa)) constitute a YjeF N-terminal domain. Residue 60–64 (NNGGD) participates in (6S)-NADPHX binding. The K(+) site is built by Asn-61 and Asp-123. (6S)-NADPHX-binding positions include 127–133 (GIGIDRA), Tyr-138, and Asp-156. A K(+)-binding site is contributed by Ser-159.

This sequence belongs to the NnrE/AIBP family. K(+) serves as cofactor.

The enzyme catalyses (6R)-NADHX = (6S)-NADHX. The catalysed reaction is (6R)-NADPHX = (6S)-NADPHX. Functionally, catalyzes the epimerization of the S- and R-forms of NAD(P)HX, a damaged form of NAD(P)H that is a result of enzymatic or heat-dependent hydration. This is a prerequisite for the S-specific NAD(P)H-hydrate dehydratase to allow the repair of both epimers of NAD(P)HX. This Limosilactobacillus reuteri (strain DSM 20016) (Lactobacillus reuteri) protein is NAD(P)H-hydrate epimerase.